A 472-amino-acid chain; its full sequence is Selenium-binding protein 2 (472 aa).

Position 467 is a phosphoserine (Ser-467).

This sequence belongs to the selenium-binding protein family. The N-terminus is blocked. In terms of tissue distribution, mainly expressed in liver.

Its subcellular location is the nucleus. It is found in the cytoplasm. It localises to the cytosol. The protein localises to the membrane. Selenium- and acetaminophen-binding protein which may be involved in the sensing of reactive xenobiotics in the cytoplasm. May be involved in intra-Golgi protein transport. The chain is Selenium-binding protein 2 (Selenbp2) from Mus musculus (Mouse).